The chain runs to 190 residues: LIM domain-containing protein WLIM1 (190 aa).

Alanine 2 carries the N-acetylalanine modification. One can recognise an LIM zinc-binding 1 domain in the interval 8–68 (QKCMACDKTV…RPHFDQNFKR (61 aa)). The segment at 74 to 98 (KSFEGTPKIGKPDRPLEGERPAGTK) is disordered. Residues 83–95 (GKPDRPLEGERPA) are compositionally biased toward basic and acidic residues. An LIM zinc-binding 2 domain is found at 108 to 168 (EKCVGCDKTV…KHHHIQLIKE (61 aa)).

As to quaternary structure, interacts with F-actin. In terms of tissue distribution, expressed in roots, leaves, stems, flowers and siliques. Not detected in pollen.

The protein resides in the cytoplasm. The protein localises to the cytoskeleton. Its function is as follows. Binds to actin filaments and promotes cross-linking into thick bundles. Has an actin-stabilizing activity. The actin regulatory activities are not regulated by pH and [Ca(2+)]. The sequence is that of LIM domain-containing protein WLIM1 from Arabidopsis thaliana (Mouse-ear cress).